Here is a 228-residue protein sequence, read N- to C-terminus: Non-fluorescent flavoprotein (228 aa).

Belongs to the bacterial luciferase oxidoreductase family. In terms of assembly, homodimer. FMN is required as a cofactor.

In Photobacterium leiognathi, this protein is Non-fluorescent flavoprotein (luxF).